The primary structure comprises 359 residues: Fructose-bisphosphate aldolase (359 aa).

Residue serine 50 coordinates D-glyceraldehyde 3-phosphate. The active-site Proton donor is the aspartate 83. Zn(2+) contacts are provided by histidine 84, aspartate 105, glutamate 142, and histidine 198. Glycine 199 is a dihydroxyacetone phosphate binding site. Histidine 232 is a binding site for Zn(2+). Dihydroxyacetone phosphate is bound by residues 233–235 and 275–278; these read GSS and NIDT.

It belongs to the class II fructose-bisphosphate aldolase family. As to quaternary structure, homodimer. The cofactor is Zn(2+).

The catalysed reaction is beta-D-fructose 1,6-bisphosphate = D-glyceraldehyde 3-phosphate + dihydroxyacetone phosphate. Its pathway is carbohydrate biosynthesis; Calvin cycle. It participates in carbohydrate degradation; glycolysis; D-glyceraldehyde 3-phosphate and glycerone phosphate from D-glucose: step 4/4. Its function is as follows. Catalyzes the aldol condensation of dihydroxyacetone phosphate (DHAP or glycerone-phosphate) with glyceraldehyde 3-phosphate (G3P) to form fructose 1,6-bisphosphate (FBP) in gluconeogenesis and the reverse reaction in glycolysis. This is Fructose-bisphosphate aldolase (cbbA) from Rhizobium meliloti (strain 1021) (Ensifer meliloti).